The chain runs to 410 residues: MKHPIHVTSEIGELQTVLLKRPGKELENLTPDYLQQLLFDDIPYLPIVQKEHDYFAQTLRNRGVEVLYLETLAAEALTDKKLREEFVNRILKEGQADANVAHQTLKEYLLSFSNEELIQKIMGGVRKNEIDTSQKTHLYELMEDHYPFYLDPMPNLYFTRDPAATIGEGVTINKMREPARRRESLFIEYIMKYHPRFANHNVPVWLNRDYKFPIEGGDELILNEETVAIGVSARTSAKAIERLAKNLFSRQNKIKKVLAIEIPKCRAFMHLDTVFTMVDYDKFTIHPAIQGPKGNMNIYILEKGLDEETLKITHRTSLMEVLKEVLGLQELVLIPCGGGDVIASAREQWNDGSNTLAIAPGVVVTYDRNYVSNALLREHGIEVIEVLSSELSRGRGGPRCMSMPIVRKDI.

C400 functions as the Amidino-cysteine intermediate in the catalytic mechanism.

The protein belongs to the arginine deiminase family.

It localises to the cytoplasm. It carries out the reaction L-arginine + H2O = L-citrulline + NH4(+). The protein operates within amino-acid degradation; L-arginine degradation via ADI pathway; carbamoyl phosphate from L-arginine: step 1/2. The chain is Arginine deiminase from Bacillus cytotoxicus (strain DSM 22905 / CIP 110041 / 391-98 / NVH 391-98).